A 436-amino-acid polypeptide reads, in one-letter code: 3-ketoacyl-CoA thiolase (436 aa).

C99 (acyl-thioester intermediate) is an active-site residue. Active-site proton acceptor residues include H392 and C422.

The protein belongs to the thiolase-like superfamily. Thiolase family. In terms of assembly, heterotetramer of two alpha chains (FadJ) and two beta chains (FadI).

It localises to the cytoplasm. The enzyme catalyses an acyl-CoA + acetyl-CoA = a 3-oxoacyl-CoA + CoA. It functions in the pathway lipid metabolism; fatty acid beta-oxidation. In terms of biological role, catalyzes the final step of fatty acid oxidation in which acetyl-CoA is released and the CoA ester of a fatty acid two carbons shorter is formed. The chain is 3-ketoacyl-CoA thiolase from Pseudoalteromonas translucida (strain TAC 125).